Consider the following 319-residue polypeptide: MNPDFLDFEQPIAELEAKIEELRYVGDDAEVNIQEEISRLQAKCKSLTESIFSKLSAWQVAQLARHPRRPYTLDYIGRLFTDFEELHGDRAYADDAAIVGGMARFDGQPVVVIGHQKGRDTKEKIRRNFGMPRPEGYRKALRLMRLAERFRLPVFTFIDTPGAYPGVGAEERGQSEAIAMNLQVMAGLRTPVICTVIGEGGSGGALAIGVGDRVMMLQYSTYSVISPEGCASILWKSAERASDAAEALGITSARLKELGLIDTIIPEPLGGAHRNPEQMAGNLHTALAEALQTFSAMDTDALLERRYGRLMGYGEYKEG.

The 262-residue stretch at 32-293 folds into the CoA carboxyltransferase C-terminal domain; that stretch reads NIQEEISRLQ…HTALAEALQT (262 aa).

The protein belongs to the AccA family. Acetyl-CoA carboxylase is a heterohexamer composed of biotin carboxyl carrier protein (AccB), biotin carboxylase (AccC) and two subunits each of ACCase subunit alpha (AccA) and ACCase subunit beta (AccD).

Its subcellular location is the cytoplasm. It catalyses the reaction N(6)-carboxybiotinyl-L-lysyl-[protein] + acetyl-CoA = N(6)-biotinyl-L-lysyl-[protein] + malonyl-CoA. Its pathway is lipid metabolism; malonyl-CoA biosynthesis; malonyl-CoA from acetyl-CoA: step 1/1. Component of the acetyl coenzyme A carboxylase (ACC) complex. First, biotin carboxylase catalyzes the carboxylation of biotin on its carrier protein (BCCP) and then the CO(2) group is transferred by the carboxyltransferase to acetyl-CoA to form malonyl-CoA. This Thioalkalivibrio sulfidiphilus (strain HL-EbGR7) protein is Acetyl-coenzyme A carboxylase carboxyl transferase subunit alpha.